We begin with the raw amino-acid sequence, 427 residues long: Delta(14)-sterol reductase (427 aa).

The Cytoplasmic portion of the chain corresponds to 1–25 (MSEQESRDNAAVDAVRQKYGFGFSW). A helical membrane pass occupies residues 26-46 (LVLMIALPPLVYYLWICVTYY). Residues 47 to 70 (QGELVFTSDAAAWRRFWSHVAPPT) lie on the Periplasmic side of the membrane. Residues 71 to 91 (WHAAGLYAAWFLGQAALQVWA) traverse the membrane as a helical segment. The Cytoplasmic segment spans residues 92–110 (PGPTVQGMKLPDGSRLDYR). The helical transmembrane segment at 111–131 (MNGIFSFLFTLAVVFGLVTMG) threads the bilayer. Residues 132 to 141 (WLDATVLYDQ) lie on the Periplasmic side of the membrane. A helical transmembrane segment spans residues 142-162 (LGPLLTVVNIFTFVFAGFLYF). Residues 163-197 (WGLNGKQWERPTGRPFYDYFMGTALNPRIGSLDLK) lie on the Cytoplasmic side of the membrane. The helical transmembrane segment at 198-218 (LFCEARPGMIFWLLMNLSMAA) threads the bilayer. Residues 219-226 (KQYELHGT) are Periplasmic-facing. A helical transmembrane segment spans residues 227 to 247 (VTVPMLLVVGFQSFYLIDYFI). Residues 248 to 262 (HEEAVLTTWDIKHEK) are Cytoplasmic-facing. The chain crosses the membrane as a helical span at residues 263–283 (FGWMLCWGDLVWLPFTYTLQA). The Periplasmic portion of the chain corresponds to 284 to 291 (QYLVHHTH). A helical transmembrane segment spans residues 292–312 (DLPVWGIIAIVALNLAGYAIF). Over 313 to 356 (RGANIQKHHFRRDPNRIVWGKPAKYIKTKQGSLLLTSGWWGIAR) the chain is Cytoplasmic. NADP(+)-binding positions include Lys319, Arg323, Leu347, Trp352, and 359–360 (NY). A helical transmembrane segment spans residues 357–377 (HMNYFGDLMIALSWCLPAAFG). Position 378 (Ser378) is a topological domain, periplasmic. The chain crosses the membrane as a helical span at residues 379-399 (PIPYFHIVYFTILLLHREKRD). NADP(+) is bound by residues Asp399, 403 to 407 (CLAKY), and Tyr414. The Cytoplasmic portion of the chain corresponds to 400–427 (DAMCLAKYGEDWLQYRKKVPWRIVPKIY).

Belongs to the ERG4/ERG24 family.

It is found in the cell inner membrane. The enzyme catalyses 4,4-dimethyl-5alpha-cholesta-8,24-dien-3beta-ol + NADP(+) = 4,4-dimethyl-5alpha-cholesta-8,14,24-trien-3beta-ol + NADPH + H(+). It participates in steroid biosynthesis; zymosterol biosynthesis; zymosterol from lanosterol. Functionally, reduces the C14=C15 double bond of 4,4-dimethyl-cholesta-8,14,24-trienol to produce 4,4-dimethyl-cholesta-8,24-dienol. Complements the deletion of the Delta(14)-sterol reductase gene ERG24 in yeast. The chain is Delta(14)-sterol reductase from Methylotuvimicrobium alcaliphilum (strain DSM 19304 / NCIMB 14124 / VKM B-2133 / 20Z) (Methylomicrobium alcaliphilum).